The sequence spans 690 residues: Eukaryotic translation initiation factor 3 subunit B (690 aa).

Residues 1-11 are compositionally biased toward basic and acidic residues; it reads MAKKKSEDHSG. The tract at residues 1 to 37 is disordered; sequence MAKKKSEDHSGGDANDSDYNEEPNFEDPPNFVDNISD. Acidic residues predominate over residues 15–25; it reads NDSDYNEEPNF. An RRM domain is found at 57–141; sequence SVVVVDNIPK…HTFAVNLFTD (85 aa). WD repeat units lie at residues 207 to 246, 247 to 289, 293 to 331, 334 to 369, 442 to 484, and 530 to 575; these read TRER…KIQK, FPHT…EKRS, DGMS…LLDL, IKIP…TLME, EIRE…KPSL, and PDHF…IKRT. A coiled-coil region spans residues 614 to 645; that stretch reads QKDRLRLTRASKELLEKRSQLRETFMEYRNKR.

It belongs to the eIF-3 subunit B family. In terms of assembly, component of the eukaryotic translation initiation factor 3 (eIF-3) complex. The eIF-3 complex interacts with pix. Interacts with mxt.

Its subcellular location is the cytoplasm. Functionally, RNA-binding component of the eukaryotic translation initiation factor 3 (eIF-3) complex, which is involved in protein synthesis of a specialized repertoire of mRNAs and, together with other initiation factors, stimulates binding of mRNA and methionyl-tRNAi to the 40S ribosome. The eIF-3 complex specifically targets and initiates translation of a subset of mRNAs involved in cell proliferation. The protein is Eukaryotic translation initiation factor 3 subunit B of Drosophila pseudoobscura pseudoobscura (Fruit fly).